Consider the following 61-residue polypeptide: Large ribosomal subunit protein bL28 (61 aa).

The protein belongs to the bacterial ribosomal protein bL28 family.

The polypeptide is Large ribosomal subunit protein bL28 (Nocardioides sp. (strain ATCC BAA-499 / JS614)).